The primary structure comprises 274 residues: uncharacterized protein (274 aa).

Its subcellular location is the plastid. It is found in the chloroplast. This is an uncharacterized protein from Euglena gracilis.